The chain runs to 662 residues: DNA ligase (662 aa).

Residues 31–35 (DYEYD), 80–81 (SL), and glutamate 109 each bind NAD(+). Lysine 111 acts as the N6-AMP-lysine intermediate in catalysis. Arginine 132, glutamate 166, lysine 282, and lysine 306 together coordinate NAD(+). Residues cysteine 400, cysteine 403, cysteine 418, and cysteine 423 each contribute to the Zn(2+) site. The BRCT domain occupies 581 to 662 (KVSNIFEGKT…FEEMLKGENI (82 aa)).

Belongs to the NAD-dependent DNA ligase family. LigA subfamily. Requires Mg(2+) as cofactor. Mn(2+) is required as a cofactor.

It catalyses the reaction NAD(+) + (deoxyribonucleotide)n-3'-hydroxyl + 5'-phospho-(deoxyribonucleotide)m = (deoxyribonucleotide)n+m + AMP + beta-nicotinamide D-nucleotide.. Its function is as follows. DNA ligase that catalyzes the formation of phosphodiester linkages between 5'-phosphoryl and 3'-hydroxyl groups in double-stranded DNA using NAD as a coenzyme and as the energy source for the reaction. It is essential for DNA replication and repair of damaged DNA. In Thermoanaerobacter sp. (strain X514), this protein is DNA ligase.